The primary structure comprises 103 residues: NADH-quinone oxidoreductase subunit K (103 aa).

The next 3 helical transmembrane spans lie at 5-25 (VPTS…LIGV), 32-52 (ILIF…LVAF), and 66-86 (FIVM…IVAI).

The protein belongs to the complex I subunit 4L family. In terms of assembly, NDH-1 is composed of 15 different subunits. Subunits NuoA, H, J, K, L, M, N constitute the membrane sector of the complex.

Its subcellular location is the cell membrane. The catalysed reaction is a quinone + NADH + 5 H(+)(in) = a quinol + NAD(+) + 4 H(+)(out). Its function is as follows. NDH-1 shuttles electrons from NADH, via FMN and iron-sulfur (Fe-S) centers, to quinones in the respiratory chain. The immediate electron acceptor for the enzyme in this species is believed to be a menaquinone. Couples the redox reaction to proton translocation (for every two electrons transferred, four hydrogen ions are translocated across the cytoplasmic membrane), and thus conserves the redox energy in a proton gradient. The polypeptide is NADH-quinone oxidoreductase subunit K (Deinococcus radiodurans (strain ATCC 13939 / DSM 20539 / JCM 16871 / CCUG 27074 / LMG 4051 / NBRC 15346 / NCIMB 9279 / VKM B-1422 / R1)).